Reading from the N-terminus, the 280-residue chain is Large ribosomal subunit protein uL2 (280 aa).

Disordered regions lie at residues 1–25 and 230–280; these read MGIR…AEVT and HPHG…SGRG. Over residues 257–280 the composition is skewed to basic residues; the sequence is KTRKRRKPSSKFIIRRRKTASGRG.

This sequence belongs to the universal ribosomal protein uL2 family. Part of the 50S ribosomal subunit. Forms a bridge to the 30S subunit in the 70S ribosome.

Functionally, one of the primary rRNA binding proteins. Required for association of the 30S and 50S subunits to form the 70S ribosome, for tRNA binding and peptide bond formation. It has been suggested to have peptidyltransferase activity; this is somewhat controversial. Makes several contacts with the 16S rRNA in the 70S ribosome. The protein is Large ribosomal subunit protein uL2 of Gloeobacter violaceus (strain ATCC 29082 / PCC 7421).